A 433-amino-acid polypeptide reads, in one-letter code: tRNA-2-methylthio-N(6)-dimethylallyladenosine synthase (433 aa).

In terms of domain architecture, MTTase N-terminal spans Lys3–Phe118. Residues Cys12, Cys49, Cys81, Cys150, Cys154, and Cys157 each coordinate [4Fe-4S] cluster. The Radical SAM core domain maps to Arg136–Glu369. In terms of domain architecture, TRAM spans Ala372–Ile433.

It belongs to the methylthiotransferase family. MiaB subfamily. As to quaternary structure, monomer. It depends on [4Fe-4S] cluster as a cofactor.

Its subcellular location is the cytoplasm. It catalyses the reaction N(6)-dimethylallyladenosine(37) in tRNA + (sulfur carrier)-SH + AH2 + 2 S-adenosyl-L-methionine = 2-methylsulfanyl-N(6)-dimethylallyladenosine(37) in tRNA + (sulfur carrier)-H + 5'-deoxyadenosine + L-methionine + A + S-adenosyl-L-homocysteine + 2 H(+). Functionally, catalyzes the methylthiolation of N6-(dimethylallyl)adenosine (i(6)A), leading to the formation of 2-methylthio-N6-(dimethylallyl)adenosine (ms(2)i(6)A) at position 37 in tRNAs that read codons beginning with uridine. The protein is tRNA-2-methylthio-N(6)-dimethylallyladenosine synthase of Campylobacter concisus (strain 13826).